The primary structure comprises 159 residues: Large ribosomal subunit protein bL17 (159 aa).

Residues 124-135 are compositionally biased toward low complexity; that stretch reads EANRATRAAASK. The segment at 124–159 is disordered; sequence EANRATRAAASKQAEEAKAEEAEATEAEAEETTEEK. A compositionally biased stretch (acidic residues) spans 145–159; it reads AEATEAEAEETTEEK.

It belongs to the bacterial ribosomal protein bL17 family. As to quaternary structure, part of the 50S ribosomal subunit. Contacts protein L32.

The chain is Large ribosomal subunit protein bL17 from Corynebacterium aurimucosum (strain ATCC 700975 / DSM 44827 / CIP 107346 / CN-1) (Corynebacterium nigricans).